We begin with the raw amino-acid sequence, 562 residues long: RNA N(6)-adenosine-methyltransferase METTL16 (562 aa).

The tract at residues 17–20 (PPDF) is RNA-binding. Arg-82, Gly-110, Ser-114, Glu-133, Thr-164, and Asn-184 together coordinate S-adenosyl-L-methionine. The tract at residues 163-167 (KTLLM) is K-loop. 3 RNA-binding regions span residues 199 to 211 (SRNPRRPPPSSVN), 250 to 254 (GKKCS), and 277 to 283 (QGRTMRW). The segment at 289–400 (FYDDVTVPSP…QLREVPRAPE (112 aa)) is VCR 1. The residue at position 329 (Ser-329) is a Phosphoserine. The span at 402–413 (VIQALEEKKPTP) shows a compositional bias: basic and acidic residues. The disordered stretch occupies residues 402-498 (VIQALEEKKP…DQEASEQFGS (97 aa)). Acidic residues predominate over residues 458–467 (ENPEPTEDER). Phosphothreonine is present on Thr-463. Over residues 480–496 (CQGSSNGAQDQEASEQF) the composition is skewed to polar residues. The VCR 2 stretch occupies residues 514-562 (YLFKCLINVKKEVDDALVEMHWVEGQNRDLMNQLCTYIRNQIFRLVAVN).

It belongs to the methyltransferase superfamily. METTL16/RlmF family. As to quaternary structure, interacts with MEPCE. Interacts with LARP7.

It is found in the nucleus. The protein localises to the cytoplasm. It carries out the reaction adenosine in U6 snRNA + S-adenosyl-L-methionine = N(6)-methyladenosine in U6 snRNA + S-adenosyl-L-homocysteine + H(+). It catalyses the reaction an adenosine in mRNA + S-adenosyl-L-methionine = an N(6)-methyladenosine in mRNA + S-adenosyl-L-homocysteine + H(+). With respect to regulation, methyltransferase activity is autoinhibited by the K-loop region that blocks S-adenosyl-L-methionine-binding. Upon activation, K-loop changes conformation, allowing S-adenosyl-L-methionine-binding and subsequent methyltransferase activity. mRNA N6-adenosine-methyltransferase activity is inhibited by zinc. Functionally, RNA N6-methyltransferase that methylates adenosine residues at the N(6) position of a subset of RNAs and is involved in S-adenosyl-L-methionine homeostasis by regulating expression of MAT2A transcripts. Able to N6-methylate a subset of mRNAs and U6 small nuclear RNAs (U6 snRNAs). In contrast to the METTL3-METTL14 heterodimer, only able to methylate a limited number of RNAs: requires both a 5'UACAGAGAA-3' nonamer sequence and a specific RNA structure. Plays a key role in S-adenosyl-L-methionine homeostasis by mediating N6-methylation of MAT2A mRNAs, altering splicing of MAT2A transcripts: in presence of S-adenosyl-L-methionine, binds the 3'-UTR region of MAT2A mRNA and specifically N6-methylates the first hairpin of MAT2A mRNA, preventing recognition of their 3'-splice site by U2AF1/U2AF35, thereby inhibiting splicing and protein production of S-adenosylmethionine synthase. In S-adenosyl-L-methionine-limiting conditions, binds the 3'-UTR region of MAT2A mRNA but stalls due to the lack of a methyl donor, preventing N6-methylation and promoting expression of MAT2A. In addition to mRNAs, also able to mediate N6-methylation of U6 small nuclear RNA (U6 snRNA): specifically N6-methylates adenine in position 43 of U6 snRNAs. Also able to bind various lncRNAs, such as 7SK snRNA (7SK RNA) or 7SL RNA. Specifically binds the 3'-end of the MALAT1 long non-coding RNA. The chain is RNA N(6)-adenosine-methyltransferase METTL16 from Homo sapiens (Human).